A 168-amino-acid polypeptide reads, in one-letter code: 6,7-dimethyl-8-ribityllumazine synthase (168 aa).

Residues F24, 58-60 (ALE), and 82-84 (AVI) each bind 5-amino-6-(D-ribitylamino)uracil. 87 to 88 (ET) contacts (2S)-2-hydroxy-3-oxobutyl phosphate. H90 functions as the Proton donor in the catalytic mechanism. N115 is a binding site for 5-amino-6-(D-ribitylamino)uracil. R129 serves as a coordination point for (2S)-2-hydroxy-3-oxobutyl phosphate.

The protein belongs to the DMRL synthase family.

It carries out the reaction (2S)-2-hydroxy-3-oxobutyl phosphate + 5-amino-6-(D-ribitylamino)uracil = 6,7-dimethyl-8-(1-D-ribityl)lumazine + phosphate + 2 H2O + H(+). It participates in cofactor biosynthesis; riboflavin biosynthesis; riboflavin from 2-hydroxy-3-oxobutyl phosphate and 5-amino-6-(D-ribitylamino)uracil: step 1/2. In terms of biological role, catalyzes the formation of 6,7-dimethyl-8-ribityllumazine by condensation of 5-amino-6-(D-ribitylamino)uracil with 3,4-dihydroxy-2-butanone 4-phosphate. This is the penultimate step in the biosynthesis of riboflavin. This is 6,7-dimethyl-8-ribityllumazine synthase from Paraburkholderia xenovorans (strain LB400).